The primary structure comprises 295 residues: Acetylglutamate kinase (295 aa).

Substrate-binding positions include 66 to 67 (GG), arginine 88, and asparagine 193.

It belongs to the acetylglutamate kinase family. ArgB subfamily.

The protein resides in the cytoplasm. It catalyses the reaction N-acetyl-L-glutamate + ATP = N-acetyl-L-glutamyl 5-phosphate + ADP. It participates in amino-acid biosynthesis; L-arginine biosynthesis; N(2)-acetyl-L-ornithine from L-glutamate: step 2/4. Functionally, catalyzes the ATP-dependent phosphorylation of N-acetyl-L-glutamate. The protein is Acetylglutamate kinase of Afipia carboxidovorans (strain ATCC 49405 / DSM 1227 / KCTC 32145 / OM5) (Oligotropha carboxidovorans).